The chain runs to 503 residues: Serine/threonine-protein kinase chk-1 (503 aa).

Positions 24 to 286 (YRVVQTLGEG…IEQIQADPWY (263 aa)) constitute a Protein kinase domain. ATP contacts are provided by residues 30-38 (LGEGAFGEV) and K54. The Proton acceptor role is filled by D150. Positions 320–346 (SAKRRHLETPNEKSTLAERQNASFSQP) are disordered. Residues 331–346 (EKSTLAERQNASFSQP) are compositionally biased toward polar residues. A Phosphoserine modification is found at S344.

It belongs to the protein kinase superfamily. CAMK Ser/Thr protein kinase family. NIM1 subfamily. Expressed in the germline.

It localises to the cytoplasm. It is found in the nucleus. Its subcellular location is the perinuclear region. It carries out the reaction L-seryl-[protein] + ATP = O-phospho-L-seryl-[protein] + ADP + H(+). The enzyme catalyses L-threonyl-[protein] + ATP = O-phospho-L-threonyl-[protein] + ADP + H(+). Its function is as follows. Serine/threonine-protein kinase which is required for checkpoint-mediated cell cycle arrest and activation of DNA repair in response to the presence of DNA damage or unreplicated DNA. May also negatively regulate cell cycle progression during unperturbed cell cycles. Required for checkpoint mediated cell cycle arrest in response to DNA damage in germline cells. Delays cell-cycle reentry of the Z2 and Z3 primordial germ cells in response to transcription-induced DNA damage as they emerge from cell cycle arrest in L1 larvae. Essential for embryogenesis. The chain is Serine/threonine-protein kinase chk-1 from Caenorhabditis elegans.